Consider the following 104-residue polypeptide: Protein EPIDERMAL PATTERNING FACTOR 1 (104 aa).

The N-terminal stretch at 1–20 (MKSLLLLAFFLSFFFGSLLA) is a signal peptide. 4 disulfide bridges follow: cysteine 60–cysteine 94, cysteine 64–cysteine 70, cysteine 67–cysteine 96, and cysteine 79–cysteine 88. Asparagine 98 carries N-linked (GlcNAc...) asparagine glycosylation.

Belongs to the plant cysteine rich small secretory peptide family. Epidermal patterning factor subfamily. As to quaternary structure, interacts with ERECTA and ERL1, but not with TMM. In terms of tissue distribution, expressed in shoots, but not in roots. Mostly localized in developing leaves, specifically in meristemoids, guard mother cells (GMCs), and young guard cells.

The protein localises to the secreted. Functionally, controls stomatal patterning. Regulates asymmetric cell division during guard cell differentiation. Mediates stomatal development inhibition. Not cleaved by the protease CRSP (AC Q9LNU1). MEPF1: mobile signal controlling stomatal development in a non-cell-autonomous manner. Uses ERL1 as major receptor. May act by competing with somatogen (AC Q9SV72) for the same receptor, TMM (AC Q9SSD1). The polypeptide is Protein EPIDERMAL PATTERNING FACTOR 1 (Arabidopsis thaliana (Mouse-ear cress)).